A 648-amino-acid chain; its full sequence is p-hydroxybenzoic acid efflux pump subunit AaeB (648 aa).

11 consecutive transmembrane segments (helical) span residues 11–31 (FACK…YFGL), 41–61 (AALV…SGAI), 65–87 (GWLR…MLLI), 91–110 (LLMI…LSSL), 125–145 (TALI…QLAL), 150–170 (EIVL…PRSV), 369–389 (LFWL…IAVV), 406–426 (FLMG…LILP), 430–450 (QSLV…GMAV), 458–478 (MGTL…GFPI), and 481–501 (FVDS…VLLV).

Belongs to the aromatic acid exporter ArAE (TC 2.A.85) family.

The protein localises to the cell inner membrane. Functionally, forms an efflux pump with AaeA. Could function as a metabolic relief valve, allowing to eliminate certain compounds when they accumulate to high levels in the cell. This is p-hydroxybenzoic acid efflux pump subunit AaeB from Edwardsiella ictaluri (strain 93-146).